The sequence spans 325 residues: NADH-quinone oxidoreductase subunit H (325 aa).

8 helical membrane passes run 11–31 (ILIS…CGAF), 81–101 (AIFT…FAIV), 114–134 (IGIL…LFAG), 154–174 (LSYE…AGSF), 186–206 (VWNV…GVAV), 237–257 (FFVG…TLFF), 265–285 (LPPF…FILI), and 304–324 (VCLP…LYNA).

It belongs to the complex I subunit 1 family. As to quaternary structure, NDH-1 is composed of 13 different subunits. Subunits NuoA, H, J, K, L, M, N constitute the membrane sector of the complex.

Its subcellular location is the cell inner membrane. It carries out the reaction a quinone + NADH + 5 H(+)(in) = a quinol + NAD(+) + 4 H(+)(out). Functionally, NDH-1 shuttles electrons from NADH, via FMN and iron-sulfur (Fe-S) centers, to quinones in the respiratory chain. The immediate electron acceptor for the enzyme in this species is believed to be ubiquinone. Couples the redox reaction to proton translocation (for every two electrons transferred, four hydrogen ions are translocated across the cytoplasmic membrane), and thus conserves the redox energy in a proton gradient. This subunit may bind ubiquinone. This Yersinia pseudotuberculosis serotype O:1b (strain IP 31758) protein is NADH-quinone oxidoreductase subunit H.